Reading from the N-terminus, the 256-residue chain is Thioredoxin-dependent peroxide reductase, mitochondrial (256 aa).

Residues 1-61 (MAAAVGRLLR…KLFSTSSSCH (61 aa)) constitute a mitochondrion transit peptide. The Thioredoxin domain occupies 63-221 (PAVTQHAPYF…TLRLVKAFQY (159 aa)). An N6-succinyllysine modification is found at Lys-83. Lys-91 bears the N6-acetyllysine; alternate mark. Lys-91 carries the post-translational modification N6-succinyllysine; alternate. Cys-108 serves as the catalytic Cysteine sulfenic acid (-SOH) intermediate. Residue Thr-146 is modified to Phosphothreonine.

The protein belongs to the peroxiredoxin family. AhpC/Prx1 subfamily. Homodimer; disulfide-linked, upon oxidation. 6 homodimers assemble to form a ring-like dodecamer. Interacts with NEK6. Interacts with LRRK2. Interacts with MAP3K13. Interacts with RPS6KC1 (via PX domain). In terms of processing, phosphorylated by LRRK2; phosphorylation reduces perodixase activity. Post-translationally, the enzyme can be inactivated by further oxidation of the cysteine sulfenic acid (C(P)-SOH) to sulphinic acid (C(P)-SO2H) and sulphonic acid (C(P)-SO3H) instead of its condensation to a disulfide bond. S-palmitoylated.

Its subcellular location is the mitochondrion. It is found in the cytoplasm. The protein resides in the early endosome. It catalyses the reaction a hydroperoxide + [thioredoxin]-dithiol = an alcohol + [thioredoxin]-disulfide + H2O. Its function is as follows. Thiol-specific peroxidase that catalyzes the reduction of hydrogen peroxide and organic hydroperoxides to water and alcohols, respectively. Plays a role in cell protection against oxidative stress by detoxifying peroxides. Acts synergistically with MAP3K13 to regulate the activation of NF-kappa-B in the cytosol. Required for the maintenance of physical strength. This is Thioredoxin-dependent peroxide reductase, mitochondrial (PRDX3) from Homo sapiens (Human).